Here is a 295-residue protein sequence, read N- to C-terminus: Protein FAM221A (295 aa).

Residues 272 to 283 (QERLLKEKEQKR) show a composition bias toward basic and acidic residues. The disordered stretch occupies residues 272–295 (QERLLKEKEQKRQKNSKPPTTNRP).

This sequence belongs to the FAM221 family.

The polypeptide is Protein FAM221A (fam221a) (Xenopus tropicalis (Western clawed frog)).